A 153-amino-acid chain; its full sequence is UPF0756 membrane protein LCA_1031 (153 aa).

The next 4 helical transmembrane spans lie at 4–24, 52–72, 85–105, and 115–135; these read WLFL…SLII, WGVT…QIGF, FIAV…VGLL, and LVFG…GPVI.

The protein belongs to the UPF0756 family.

It localises to the cell membrane. This is UPF0756 membrane protein LCA_1031 from Latilactobacillus sakei subsp. sakei (strain 23K) (Lactobacillus sakei subsp. sakei).